A 147-amino-acid polypeptide reads, in one-letter code: Hemoglobin subunit epsilon (147 aa).

In terms of domain architecture, Globin spans 3 to 147; that stretch reads HFTAEEKTAI…VASALAHKYH (145 aa). Residues Ser14 and Ser51 each carry the phosphoserine modification. Heme b-binding residues include His64 and His93.

Belongs to the globin family. As to expression, red blood cells.

Functionally, hemoglobin epsilon chain is an embryonic-type beta-type chain found in prenatal and neonatal marsupials. This chain is Hemoglobin subunit epsilon (HBE1), found in Notamacropus eugenii (Tammar wallaby).